The primary structure comprises 371 residues: Probable trehalose-phosphate phosphatase 1 (371 aa).

Belongs to the trehalose phosphatase family. A divalent metal cation serves as cofactor. Expressed in roots and shoots.

It catalyses the reaction alpha,alpha-trehalose 6-phosphate + H2O = alpha,alpha-trehalose + phosphate. Its pathway is glycan biosynthesis; trehalose biosynthesis. In terms of biological role, removes the phosphate from trehalose 6-phosphate to produce free trehalose. Trehalose accumulation in plant improves abiotic stress tolerance. In Oryza sativa subsp. japonica (Rice), this protein is Probable trehalose-phosphate phosphatase 1 (TPP1).